Reading from the N-terminus, the 441-residue chain is Mitochondrial inner membrane protein OXA1L (441 aa).

At 1-113 the chain is on the mitochondrial intermembrane side; that stretch reads MALALMCGRR…QAAAEQSFAE (113 aa). Residues 114 to 134 traverse the membrane as a helical segment; the sequence is LGLGSYTPVGLIQNLLEFMHV. The Mitochondrial matrix segment spans residues 135-139; it reads NLGLP. Residues 140–160 form a helical membrane-spanning segment; sequence WWGAIAACTVLARCLVFPLIV. Residues 161-212 are Mitochondrial intermembrane-facing; it reads KGQREAAKIHNHLPEIQKFSARIREAKLTGNHTEFYRASSEMTFYQKKHDIK. The chain crosses the membrane as a helical span at residues 213 to 233; the sequence is LFRPLILPLTQAPIFISFFIA. The Mitochondrial matrix portion of the chain corresponds to 234-260; the sequence is LREMANLPVPSLQTGGLWWFQDLTLSD. Residues 261–281 form a helical membrane-spanning segment; it reads PIYVLPLVVTATMWGVLELGA. Residues 282 to 298 lie on the Mitochondrial intermembrane side of the membrane; it reads ETGMQSSDLQWMRNFIR. A helical transmembrane segment spans residues 299–319; that stretch reads LMPLAVLPITIHFPTAVFMYW. At 320–441 the chain is on the mitochondrial matrix side; it reads LSSNMFSLGQ…SKQPWRDTLG (122 aa). Ser364 carries the phosphoserine modification. Thr400 carries the phosphothreonine modification. Positions 405 to 441 are disordered; sequence PLLQHGKNDPPNTPNSSSSSSSSNKAKSKQPWRDTLG. A compositionally biased stretch (low complexity) spans 418–429; sequence PNSSSSSSSSNK.

It belongs to the OXA1/ALB3/YidC family. In terms of assembly, monomer; predominantly monomeric at low salt concentrations. Homooligomer; predominantly homooligomeric at high salt concentrations. Associates with the mitochondrial ribosome. Associates preferentially as a dimer with the large ribosomal subunit 39S of the mitochondrial ribosome. Interacts with OXA1L; promoting cotranslational quality control in mitochondria.

Its subcellular location is the mitochondrion inner membrane. Mitochondrial membrane insertase that mediates the cotranslational insertion of integral membrane proteins into the mitochondrial inner membrane. Essential for the activity and assembly of cytochrome oxidase. Required for the correct biogenesis of ATP synthase and complex I in mitochondria. The polypeptide is Mitochondrial inner membrane protein OXA1L (OXA1L) (Bos taurus (Bovine)).